The following is a 264-amino-acid chain: Apolipoprotein A-I (264 aa).

The first 18 residues, 1–18 (MKAVLLVVAALFLAGSQA), serve as a signal peptide directing secretion. Tandem repeats lie at residues 67-88 (LRLS…ADFG) and 89-110 (LATQ…QIVS). Positions 67 to 264 (LRLSDNWDTL…DQASKQLAAQ (198 aa)) are 10 X approximate tandem repeats. Residues 111–121 (EDLQDVKHKVQ) form a 3; half-length repeat. 5 consecutive repeat copies span residues 122-143 (PYLE…EKVR), 144-165 (PLGI…EKLT), 166-187 (PLGE…TQLA), 188-207 (PFSE…LKDS), and 208-229 (ATLA…EKAK). Methionine 193 bears the Methionine sulfoxide mark. One copy of the 9; half-length repeat lies at 230 to 240 (PALEDLRQGLL). Copy 10 of the repeat occupies 241-264 (PVLENLKASILSSIDQASKQLAAQ).

The protein belongs to the apolipoprotein A1/A4/E family. Homodimer. Interacts with APOA1BP and CLU. Component of a sperm activating protein complex (SPAP), consisting of APOA1, an immunoglobulin heavy chain, an immunoglobulin light chain and albumin. Interacts with NDRG1. Interacts with SCGB3A2. Interacts with NAXE and YJEFN3. Post-translationally, glycosylated. In terms of processing, palmitoylated. Phosphorylation sites are present in the extracellular medium.

The protein resides in the secreted. In terms of biological role, participates in the reverse transport of cholesterol from tissues to the liver for excretion by promoting cholesterol efflux from tissues and by acting as a cofactor for the lecithin cholesterol acyltransferase (LCAT). As part of the SPAP complex, activates spermatozoa motility. This chain is Apolipoprotein A-I (APOA1), found in Cavia porcellus (Guinea pig).